The following is a 93-amino-acid chain: Putative sodium channel toxin Ts41 (93 aa).

Positions Met-1 to Ser-23 are cleaved as a signal peptide. 4 cysteine pairs are disulfide-bonded: Cys-22-Cys-87, Cys-39-Cys-62, Cys-48-Cys-67, and Cys-52-Cys-69. One can recognise an LCN-type CS-alpha/beta domain in the interval Glu-26–Lys-88.

The protein belongs to the long (4 C-C) scorpion toxin superfamily. As to expression, expressed by the venom gland.

The protein localises to the secreted. In terms of biological role, the edited BmKBTx-like may modulate voltage-gated sodium channels (Nav). Functionally, the non-edited form is able to form a heterodimer. In orthologs, a heterodimer with LVP beta-chain induces lipolysis in rat adipocytes, which is mediated through the beta-2 adrenergic receptor pathway (ADRB2). Since no LVP beta-chains have been identified in the venom of this scorpion, it is possible that this protein is not involved in a lipolysis process. This chain is Putative sodium channel toxin Ts41, found in Tityus serrulatus (Brazilian scorpion).